The following is a 238-amino-acid chain: Uridylate kinase (238 aa).

ATP is bound at residue 12-15 (KLSG). Gly54 is a UMP binding site. Gly55 and Arg59 together coordinate ATP. UMP-binding positions include Asp74 and 135–142 (TGNPFFTT). ATP is bound by residues Thr162, Tyr168, and Asp171.

This sequence belongs to the UMP kinase family. As to quaternary structure, homohexamer.

The protein localises to the cytoplasm. It carries out the reaction UMP + ATP = UDP + ADP. It participates in pyrimidine metabolism; CTP biosynthesis via de novo pathway; UDP from UMP (UMPK route): step 1/1. Inhibited by UTP. Functionally, catalyzes the reversible phosphorylation of UMP to UDP. The protein is Uridylate kinase of Nitrosospira multiformis (strain ATCC 25196 / NCIMB 11849 / C 71).